The following is a 458-amino-acid chain: tRNA modification GTPase MnmE (458 aa).

The (6S)-5-formyl-5,6,7,8-tetrahydrofolate site is built by Arg-22, Glu-84, and Arg-123. A TrmE-type G domain is found at 220 to 379 (GIATAIIGRP…LEKAIADLFF (160 aa)). Asn-230 contributes to the K(+) binding site. GTP contacts are provided by residues 230–235 (NVGKSS), 249–255 (TDIAGTT), and 274–277 (DTAG). Ser-234 provides a ligand contact to Mg(2+). 3 residues coordinate K(+): Thr-249, Ile-251, and Thr-254. Residue Thr-255 participates in Mg(2+) binding. A (6S)-5-formyl-5,6,7,8-tetrahydrofolate-binding site is contributed by Lys-458.

It belongs to the TRAFAC class TrmE-Era-EngA-EngB-Septin-like GTPase superfamily. TrmE GTPase family. As to quaternary structure, homodimer. Heterotetramer of two MnmE and two MnmG subunits. Requires K(+) as cofactor.

The protein localises to the cytoplasm. Its function is as follows. Exhibits a very high intrinsic GTPase hydrolysis rate. Involved in the addition of a carboxymethylaminomethyl (cmnm) group at the wobble position (U34) of certain tRNAs, forming tRNA-cmnm(5)s(2)U34. The protein is tRNA modification GTPase MnmE of Bacillus thuringiensis (strain Al Hakam).